The chain runs to 292 residues: MANLKALKVRIGSVKNTRQITKAMKMVAAAKLRKATEQAESARPYSKRMSRMMHSLAPAAAGRDNAPELLVGRGDVKKVNLVVYTADRGLCGSFNSVVIRATRARIAELEKQGFQVMLTFIGRKAYDVLKRSHGHLVRKVYTEMSRHMSFAYVEKNIVKELIKDFHEGQFDACYLVFNQFKSAMSQELTWAQSIPQPIDTEGASTQTGYQFEPVEEELLEELLPRNLAVQVFQALAESEASEHGSRMTAMDNAVRNAGDMVKKLQTKYNRSRQAAITTELIEIISGAESLKG.

The protein belongs to the ATPase gamma chain family. As to quaternary structure, F-type ATPases have 2 components, CF(1) - the catalytic core - and CF(0) - the membrane proton channel. CF(1) has five subunits: alpha(3), beta(3), gamma(1), delta(1), epsilon(1). CF(0) has three main subunits: a, b and c.

It localises to the cell inner membrane. Its function is as follows. Produces ATP from ADP in the presence of a proton gradient across the membrane. The gamma chain is believed to be important in regulating ATPase activity and the flow of protons through the CF(0) complex. The protein is ATP synthase gamma chain of Magnetococcus marinus (strain ATCC BAA-1437 / JCM 17883 / MC-1).